The sequence spans 121 residues: uncharacterized protein (121 aa).

Residues 11–31 (IFQFFVFPFYYFLLIITEIGF) form a helical membrane-spanning segment.

It localises to the membrane. This is an uncharacterized protein from Schizosaccharomyces pombe (strain 972 / ATCC 24843) (Fission yeast).